The primary structure comprises 71 residues: Small ribosomal subunit protein bS21 (71 aa).

It belongs to the bacterial ribosomal protein bS21 family.

This Thioalkalivibrio sulfidiphilus (strain HL-EbGR7) protein is Small ribosomal subunit protein bS21.